Consider the following 612-residue polypeptide: Sulfite reductase [NADPH] hemoprotein beta-component (612 aa).

The disordered stretch occupies residues 1–26 (MDDHKPIETPDGPAVDTPGIGARRYE). [4Fe-4S] cluster-binding residues include Cys-469, Cys-475, Cys-514, and Cys-518. Siroheme is bound at residue Cys-518.

It belongs to the nitrite and sulfite reductase 4Fe-4S domain family. In terms of assembly, alpha(8)-beta(8). The alpha component is a flavoprotein, the beta component is a hemoprotein. It depends on siroheme as a cofactor. [4Fe-4S] cluster is required as a cofactor.

The catalysed reaction is hydrogen sulfide + 3 NADP(+) + 3 H2O = sulfite + 3 NADPH + 4 H(+). Its pathway is sulfur metabolism; hydrogen sulfide biosynthesis; hydrogen sulfide from sulfite (NADPH route): step 1/1. Functionally, component of the sulfite reductase complex that catalyzes the 6-electron reduction of sulfite to sulfide. This is one of several activities required for the biosynthesis of L-cysteine from sulfate. The chain is Sulfite reductase [NADPH] hemoprotein beta-component from Methylorubrum extorquens (strain CM4 / NCIMB 13688) (Methylobacterium extorquens).